We begin with the raw amino-acid sequence, 233 residues long: Small ribosomal subunit protein uS2c (233 aa).

Belongs to the universal ribosomal protein uS2 family.

The protein resides in the plastid. It localises to the chloroplast. The chain is Small ribosomal subunit protein uS2c (rps2) from Galdieria sulphuraria (Red alga).